Reading from the N-terminus, the 681-residue chain is PAB-dependent poly(A)-specific ribonuclease subunit pan3-like (681 aa).

A C3H1-type zinc finger spans residues 9-38 (FSTNIPCRNEQLYGRCPYIDKGCFFQHKNQ). 2 disordered regions span residues 38–58 (QDNA…PQNS) and 82–123 (SSAS…TVSL). Positions 41–50 (APASSKPPSA) are enriched in low complexity. The segment covering 96–106 (KSYSSALSSGK) has biased composition (polar residues). Serine 165 bears the Phosphoserine mark.

It belongs to the protein kinase superfamily. PAN3 family.

The protein resides in the cytoplasm. In terms of biological role, regulatory subunit of the poly(A)-nuclease (PAN) deadenylation complex. The polypeptide is PAB-dependent poly(A)-specific ribonuclease subunit pan3-like (Schizosaccharomyces pombe (strain 972 / ATCC 24843) (Fission yeast)).